A 566-amino-acid chain; its full sequence is Proline--tRNA ligase 1 (566 aa).

This sequence belongs to the class-II aminoacyl-tRNA synthetase family. ProS type 1 subfamily. Homodimer.

It localises to the cytoplasm. The catalysed reaction is tRNA(Pro) + L-proline + ATP = L-prolyl-tRNA(Pro) + AMP + diphosphate. In terms of biological role, catalyzes the attachment of proline to tRNA(Pro) in a two-step reaction: proline is first activated by ATP to form Pro-AMP and then transferred to the acceptor end of tRNA(Pro). As ProRS can inadvertently accommodate and process non-cognate amino acids such as alanine and cysteine, to avoid such errors it has two additional distinct editing activities against alanine. One activity is designated as 'pretransfer' editing and involves the tRNA(Pro)-independent hydrolysis of activated Ala-AMP. The other activity is designated 'posttransfer' editing and involves deacylation of mischarged Ala-tRNA(Pro). The misacylated Cys-tRNA(Pro) is not edited by ProRS. This chain is Proline--tRNA ligase 1, found in Bacillus cereus (strain ATCC 14579 / DSM 31 / CCUG 7414 / JCM 2152 / NBRC 15305 / NCIMB 9373 / NCTC 2599 / NRRL B-3711).